The following is a 366-amino-acid chain: Envelope glycoprotein M (366 aa).

Over 1–17 (MMKASRSDTFMLRTWIQ) the chain is Intravirion. Residues 18-38 (LLVLFVIMFIMSAILPIAASV) form a helical membrane-spanning segment. Residues 39–83 (EGLGFPCYFPNLVDYSLLNLTLRNAAKHLTPTLFLEAPELFVYIT) lie on the Virion surface side of the membrane. A helical transmembrane segment spans residues 84-104 (WSVLVDLASAIYYVVGALAIL). The Intravirion segment spans residues 105–113 (QARKTHLTS). A helical membrane pass occupies residues 114–134 (MITLQTWINLVGSHTMLFIGI). At 135-153 (ARMWTLQLFIHVLSYKHVM) the chain is on the virion surface side. The chain crosses the membrane as a helical span at residues 154–174 (LAAFIYFLHFCLSYMHTLSLV). Residues 175-209 (SRNSPKWSVLLMEQHIPKQSLLSTILDYGKPLCVN) lie on the Intravirion side of the membrane. Residues 210-230 (MYLSLLALEMLVFSLGFMMAI) form a helical membrane-spanning segment. The Virion surface segment spans residues 231 to 235 (GNSFY). The helical transmembrane segment at 236–256 (ILVSDTVLASINLYFVLTTFW) threads the bilayer. At 257 to 269 (YMMTEMFLQDYLK) the chain is on the intravirion side. The chain crosses the membrane as a helical span at residues 270-290 (LQFGFYLGVFSGSLILLLPVL). The Virion surface segment spans residues 291–304 (RYEAVFVSANLHKT). The chain crosses the membrane as a helical span at residues 305–325 (VAVNIAMIPAMCVIAMMFRLF). Topologically, residues 326-366 (RYSQQVRKPENSYTPLPKRFKKRRQKQDQQLIMVETSDEEL) are intravirion.

Belongs to the herpesviridae glycoprotein M family. In terms of assembly, interacts (via N-terminus) with gN (via N-terminus). The gM-gN heterodimer forms the gCII complex.

It localises to the virion membrane. Its subcellular location is the host Golgi apparatus. It is found in the host trans-Golgi network. The protein localises to the host endosome membrane. The protein resides in the host nucleus inner membrane. In terms of biological role, envelope glycoprotein important for virion assembly and egress. Plays a role in the correct incorporation of gH-gL into virion membrane. Directs the glycoprotein N (gN) to the host trans-Golgi network. This Saimiri sciureus (Common squirrel monkey) protein is Envelope glycoprotein M.